Consider the following 195-residue polypeptide: Interferon tau (195 aa).

The N-terminal stretch at 1 to 23 is a signal peptide; that stretch reads MAFMLSLLMALVLVSYGLGGSLG. Intrachain disulfides connect cysteine 52/cysteine 162 and cysteine 87/cysteine 109.

The protein belongs to the alpha/beta interferon family. IFN-alphaII subfamily.

Its subcellular location is the secreted. Paracrine hormone primarily responsible for maternal recognition of pregnancy. Interacts with endometrial receptors, probably type I interferon receptors, and blocks estrogen receptor expression, preventing the estrogen-induced increase in oxytocin receptor expression in the endometrium. This results in the suppression of the pulsatile endometrial release of the luteolytic hormone prostaglandin F2-alpha, hindering the regression of the corpus luteum (luteolysis) and therefore a return to ovarian cyclicity. This, and a possible direct effect of IFN-tau on prostaglandin synthesis, leads in turn to continued ovarian progesterone secretion, which stimulates the secretion by the endometrium of the nutrients required for the growth of the conceptus. In summary, displays particularly high antiviral and antiproliferative potency concurrently with particular weak cytotoxicity, high antiluteolytic activity and immunomodulatory properties. In contrast with other IFNs, IFN-tau is not virally inducible. The protein is Interferon tau (IFNT) of Giraffa camelopardalis (Giraffe).